A 675-amino-acid polypeptide reads, in one-letter code: DNA ligase (675 aa).

NAD(+) contacts are provided by residues 32 to 36, 81 to 82, and glutamate 113; these read DAEYD and SL. Lysine 115 serves as the catalytic N6-AMP-lysine intermediate. The NAD(+) site is built by arginine 136, glutamate 173, lysine 291, and lysine 315. Positions 409, 412, 427, and 433 each coordinate Zn(2+). A BRCT domain is found at 595–675; the sequence is SEKTYFFNKK…ELNSLIRIKE (81 aa).

Belongs to the NAD-dependent DNA ligase family. LigA subfamily. The cofactor is Mg(2+). Mn(2+) serves as cofactor.

The catalysed reaction is NAD(+) + (deoxyribonucleotide)n-3'-hydroxyl + 5'-phospho-(deoxyribonucleotide)m = (deoxyribonucleotide)n+m + AMP + beta-nicotinamide D-nucleotide.. Its function is as follows. DNA ligase that catalyzes the formation of phosphodiester linkages between 5'-phosphoryl and 3'-hydroxyl groups in double-stranded DNA using NAD as a coenzyme and as the energy source for the reaction. It is essential for DNA replication and repair of damaged DNA. The polypeptide is DNA ligase (Buchnera aphidicola subsp. Acyrthosiphon pisum (strain 5A)).